Consider the following 544-residue polypeptide: Probable protein kinase UbiB (544 aa).

A Protein kinase domain is found at 123 to 504 (DFDENALASA…QRWQKKMFVL (382 aa)). ATP contacts are provided by residues 129–137 (LASASIAQV) and lysine 155. The Proton acceptor role is filled by aspartate 290. 2 consecutive transmembrane segments (helical) span residues 501–521 (MFVL…FAAL) and 523–543 (LAIS…GFLL).

It belongs to the ABC1 family. UbiB subfamily.

The protein localises to the cell inner membrane. It participates in cofactor biosynthesis; ubiquinone biosynthesis [regulation]. Functionally, is probably a protein kinase regulator of UbiI activity which is involved in aerobic coenzyme Q (ubiquinone) biosynthesis. This Histophilus somni (strain 129Pt) (Haemophilus somnus) protein is Probable protein kinase UbiB.